Here is a 152-residue protein sequence, read N- to C-terminus: Nucleoside diphosphate kinase (152 aa).

ATP contacts are provided by K11, F59, R87, T93, R104, and N114. The active-site Pros-phosphohistidine intermediate is the H117.

The protein belongs to the NDK family. Homotetramer. Mg(2+) serves as cofactor.

The protein localises to the cytoplasm. The catalysed reaction is a 2'-deoxyribonucleoside 5'-diphosphate + ATP = a 2'-deoxyribonucleoside 5'-triphosphate + ADP. It catalyses the reaction a ribonucleoside 5'-diphosphate + ATP = a ribonucleoside 5'-triphosphate + ADP. Its function is as follows. Major role in the synthesis of nucleoside triphosphates other than ATP. The ATP gamma phosphate is transferred to the NDP beta phosphate via a ping-pong mechanism, using a phosphorylated active-site intermediate. In Prochlorococcus marinus subsp. pastoris (strain CCMP1986 / NIES-2087 / MED4), this protein is Nucleoside diphosphate kinase.